The following is a 158-amino-acid chain: MSRRHRAVKREILPDPKFGDVVITRFMNALMYDGKKSTAEGIVYGALEVMRRRGGTTADPVAMFHSALDNVKPAVEVRSRRVGGATYQVPVEVRAERRQALAIRWLIDASRKRGENTMQERLSNELMDAVNNRGSAVKKREDTHRMAEANKAFSHYRW.

Belongs to the universal ribosomal protein uS7 family. Part of the 30S ribosomal subunit. Contacts proteins S9 and S11.

One of the primary rRNA binding proteins, it binds directly to 16S rRNA where it nucleates assembly of the head domain of the 30S subunit. Is located at the subunit interface close to the decoding center, probably blocks exit of the E-site tRNA. The chain is Small ribosomal subunit protein uS7 from Gluconobacter oxydans (strain 621H) (Gluconobacter suboxydans).